An 860-amino-acid chain; its full sequence is Transcription factor E2F8 (860 aa).

The disordered stretch occupies residues 1–114 (MENQKENLFS…NEKSQPSRKE (114 aa)). At S71 the chain carries Phosphoserine. 2 stretches are compositionally biased toward basic and acidic residues: residues 74 to 84 (IRSRDQKRGLS) and 92 to 114 (EARDCLHEPQAKTNEKSQPSRKE). 2 DNA-binding regions span residues 112–181 (RKEK…TWHG) and 261–347 (RKDK…KWTG). Disordered stretches follow at residues 407-433 (RRKISSAPSSPVKSSKAESSQNSPPVP) and 533-616 (TPPH…PKED). Over residues 411–426 (SSAPSSPVKSSKAESS) the composition is skewed to low complexity. Residues S412 and S416 each carry the phosphoserine modification. Polar residues predominate over residues 542-554 (VCPTQSSNATGSK). 2 stretches are compositionally biased toward basic and acidic residues: residues 555 to 565 (DPTDAPTEKTA) and 586 to 596 (RSKETTGDRGT).

It belongs to the E2F/DP family. Homodimer and heterodimer: mainly forms homodimers and, to a lesser extent, heterodimers with E2F8. Dimerization is important for DNA-binding. Interacts with HIF1A.

The protein resides in the nucleus. In terms of biological role, atypical E2F transcription factor that participates in various processes such as angiogenesis and polyploidization of specialized cells. Mainly acts as a transcription repressor that binds DNA independently of DP proteins and specifically recognizes the E2 recognition site 5'-TTTC[CG]CGC-3'. Directly represses transcription of classical E2F transcription factors such as E2F1: component of a feedback loop in S phase by repressing the expression of E2F1, thereby preventing p53/TP53-dependent apoptosis. Plays a key role in polyploidization of cells in placenta and liver by regulating the endocycle, probably by repressing genes promoting cytokinesis and antagonizing action of classical E2F proteins (E2F1, E2F2 and/or E2F3). Required for placental development by promoting polyploidization of trophoblast giant cells. Acts as a promoter of sprouting angiogenesis, possibly by acting as a transcription activator: associates with HIF1A, recognizes and binds the VEGFA promoter, which is different from canonical E2 recognition site, and activates expression of the VEGFA gene. This is Transcription factor E2F8 (E2f8) from Rattus norvegicus (Rat).